Reading from the N-terminus, the 256-residue chain is Glutamate racemase (256 aa).

Residues 11-12 (DS) and 43-44 (YG) each bind substrate. C74 serves as the catalytic Proton donor/acceptor. 75–76 (NT) contributes to the substrate binding site. Catalysis depends on C182, which acts as the Proton donor/acceptor. A substrate-binding site is contributed by 183-184 (TH).

The protein belongs to the aspartate/glutamate racemases family.

It catalyses the reaction L-glutamate = D-glutamate. Its pathway is cell wall biogenesis; peptidoglycan biosynthesis. Functionally, provides the (R)-glutamate required for cell wall biosynthesis. The polypeptide is Glutamate racemase (Leptospira interrogans serogroup Icterohaemorrhagiae serovar copenhageni (strain Fiocruz L1-130)).